The chain runs to 803 residues: Mechanosensitive cation channel TMEM63A (803 aa).

The Extracellular portion of the chain corresponds to 1 to 51 (MTDSPFLELWQSRTVAIRERLGIGDQPNDSYCYNSAKNSTVLQGVTFGGIP). A helical membrane pass occupies residues 52 to 74 (TVLFIDVSCFLFLIVVFSIIRRK). Topologically, residues 75 to 133 (FWDYGRIALVSEGNSESRFRRLSSSSSGQQDFESELGCCSWLTAIFRLHDDQILEWCGE) are cytoplasmic. Residues 134 to 166 (DAIHYLSFQRHIIFLLVVVSCLSLCIILPVNLS) form a helical membrane-spanning segment. At 167 to 190 (GDLLDKDPYSFGRTTIANLQTDNN) the chain is on the extracellular side. Residues 191–216 (LLWLHTIFAILYLILTVVFMRHHTQS) traverse the membrane as a helical segment. At 217–415 (IKYKEESLVR…CWKNLSIQGF (199 aa)) the chain is on the cytoplasmic side. The segment at 218–413 (KYKEESLVRR…DICWKNLSIQ (196 aa)) is intracellular linker IL2; confers mechanosensitivity. A helical membrane pass occupies residues 416-443 (RWWFQWLGINFILFVGLFFLTTPSIILS). Residues 444 to 461 (TMDKFNVTKPIHALNDPI) lie on the Extracellular side of the membrane. The chain crosses the membrane as a helical span at residues 462–489 (ISQFFPTLLLWSFSALLPTIVCYSTLLE). Topologically, residues 490-494 (SHWTK) are cytoplasmic. Residues 495–531 (SGENRIMMTKVYIFLIFMVLILPSLGLTSLDFFFRWL) form a helical membrane-spanning segment. The Extracellular segment spans residues 532–553 (FDKTSSEASIRLECVFLPDQGA). The helical transmembrane segment at 554 to 585 (FFVNYVIASAFIGNGMELLRLPGLILYTFRMV) threads the bilayer. The gating helix stretch occupies residues 554-585 (FFVNYVIASAFIGNGMELLRLPGLILYTFRMV). Residues 586-605 (MAKTAADRRNVKQHQAFEYE) are Cytoplasmic-facing. The chain crosses the membrane as a helical span at residues 606–623 (FGAMYAWMLCVFTVIMAY). Over 624–627 (SITC) the chain is Extracellular. The chain crosses the membrane as a helical span at residues 628–650 (PIIVPFGLIYILLKHMVDRHNLY). The Cytoplasmic portion of the chain corresponds to 651–660 (FAYLPAKLEK). The chain crosses the membrane as a helical span at residues 661-688 (RIHFAAVNQALAAPILCLFWLYFFSFLR). Residues 689-693 (LGLKA) lie on the Extracellular side of the membrane. The helical transmembrane segment at 694–708 (PLTLFTFLVLLLTIL) threads the bilayer. Residues 709–803 (VCLAYTCFGC…DSVAAADQED (95 aa)) are Cytoplasmic-facing.

This sequence belongs to the CSC1 (TC 1.A.17) family. As to quaternary structure, (Microbial infection) Interacts with H.contortus GAL-1 (via domain galectin 1).

The protein resides in the lysosome membrane. It localises to the early endosome membrane. Its subcellular location is the cell membrane. It catalyses the reaction Ca(2+)(in) = Ca(2+)(out). Functionally, mechanosensitive cation channel with low conductance and high activation threshold. In contrast to TMEM63B, does not show phospholipid scramblase activity. Acts as a regulator of lysosomal morphology by mediating lysosomal mechanosensitivity. Important for the baby's first breath and respiration throughout life. Upon lung inflation conducts cation currents in alveolar type 1 and 2 cells triggering lamellar body exocytosis and surfactant secretion into airspace. Also acts as an osmosensitive cation channel preferentially activated by hypotonic stress. In terms of biological role, (Microbial infection) Involved in the immunomodulatory effects exerted by H.contortus GAL-1 on host peripheral blood mononuclear cells to down-regulate host immune response. This is Mechanosensitive cation channel TMEM63A (TMEM63A) from Capra hircus (Goat).